The chain runs to 401 residues: Enolase (401 aa).

Residue Q154 participates in (2R)-2-phosphoglycerate binding. The active-site Proton donor is the E197. 3 residues coordinate Mg(2+): D233, E274, and D301. Residues K326, R355, S356, and K377 each contribute to the (2R)-2-phosphoglycerate site. Residue K326 is the Proton acceptor of the active site.

It belongs to the enolase family. The cofactor is Mg(2+).

It localises to the cytoplasm. It is found in the secreted. The protein localises to the cell surface. It carries out the reaction (2R)-2-phosphoglycerate = phosphoenolpyruvate + H2O. The protein operates within carbohydrate degradation; glycolysis; pyruvate from D-glyceraldehyde 3-phosphate: step 4/5. In terms of biological role, catalyzes the reversible conversion of 2-phosphoglycerate (2-PG) into phosphoenolpyruvate (PEP). It is essential for the degradation of carbohydrates via glycolysis. This is Enolase from Thermoplasma acidophilum (strain ATCC 25905 / DSM 1728 / JCM 9062 / NBRC 15155 / AMRC-C165).